We begin with the raw amino-acid sequence, 402 residues long: MNVEHNTVSLGEFEFDCGETIPELEITYEAYGEFDGDNAVLVCHALTGSAHVAGRDRVDSADQARAWWDDIVGPGKAIDTTEYYVVCANVPGSCYGSTGPKSENPETGEPYGTDFPPVTVTDWTEAQRALLDELGIPHLHAVVGGSVGGMNVIEWAKRHPDHVDRIVPIAAAARLDTQCLSLDAIARRAITTDPNWKQGHYYGEDDEPPSDGLALARQLGHVMYLSKASMERRFGRRAAGRDAVRTFPTDAAGAFFPYRDVESYLDYNAEKFTERFDANSYLYLTRAMDNYDLAAGFESDADALAAFDGDALVMSFTADWHFTTQQAEALADSLRAADANVAHHVIDSDHGHDAFLVEPDNVGPPLADFLDAGVDGNAVTDSVVEDSQESNFAPVHNSLFSQ.

The region spanning 38–359 (NAVLVCHALT…HGHDAFLVEP (322 aa)) is the AB hydrolase-1 domain. The Nucleophile role is filled by Ser-146. Arg-217 provides a ligand contact to substrate. Active-site residues include Asp-319 and His-352. Asp-353 contributes to the substrate binding site.

This sequence belongs to the AB hydrolase superfamily. MetX family. Homodimer.

The protein resides in the cytoplasm. The catalysed reaction is L-homoserine + acetyl-CoA = O-acetyl-L-homoserine + CoA. Its pathway is amino-acid biosynthesis; L-methionine biosynthesis via de novo pathway; O-acetyl-L-homoserine from L-homoserine: step 1/1. Transfers an acetyl group from acetyl-CoA to L-homoserine, forming acetyl-L-homoserine. The sequence is that of Homoserine O-acetyltransferase from Haloarcula marismortui (strain ATCC 43049 / DSM 3752 / JCM 8966 / VKM B-1809) (Halobacterium marismortui).